The chain runs to 438 residues: 3-phosphoshikimate 1-carboxyvinyltransferase (438 aa).

3 residues coordinate 3-phosphoshikimate: lysine 28, serine 29, and arginine 33. Phosphoenolpyruvate is bound at residue lysine 28. Residues glycine 97 and arginine 125 each coordinate phosphoenolpyruvate. Serine 168, serine 169, glutamine 170, glutamate 316, and histidine 343 together coordinate 3-phosphoshikimate. Glutamine 170 is a phosphoenolpyruvate binding site. Catalysis depends on glutamate 316, which acts as the Proton acceptor. Phosphoenolpyruvate is bound by residues arginine 347, arginine 388, and lysine 413.

It belongs to the EPSP synthase family. In terms of assembly, monomer.

The protein localises to the cytoplasm. It carries out the reaction 3-phosphoshikimate + phosphoenolpyruvate = 5-O-(1-carboxyvinyl)-3-phosphoshikimate + phosphate. Its pathway is metabolic intermediate biosynthesis; chorismate biosynthesis; chorismate from D-erythrose 4-phosphate and phosphoenolpyruvate: step 6/7. Its function is as follows. Catalyzes the transfer of the enolpyruvyl moiety of phosphoenolpyruvate (PEP) to the 5-hydroxyl of shikimate-3-phosphate (S3P) to produce enolpyruvyl shikimate-3-phosphate and inorganic phosphate. This is 3-phosphoshikimate 1-carboxyvinyltransferase from Rhodococcus jostii (strain RHA1).